We begin with the raw amino-acid sequence, 349 residues long: N-acetyltaurine hydrolase (349 aa).

Residues H26, H28, E169, H201, H230, and D298 each coordinate a divalent metal cation.

It belongs to the metallo-dependent hydrolases superfamily. Phosphotriesterase family. The cofactor is a divalent metal cation.

It localises to the cytoplasm. The protein resides in the cytosol. It carries out the reaction N-acetyltaurine + H2O = taurine + acetate. The enzyme catalyses N-propanoyltaurine + H2O = propanoate + taurine. It catalyses the reaction N-acetyl-L-methionine + H2O = L-methionine + acetate. The catalysed reaction is N-acetyl-L-isoleucine + H2O = L-isoleucine + acetate. It carries out the reaction N-acetyl-L-leucine + H2O = L-leucine + acetate. The enzyme catalyses N-acetyl-L-valine + H2O = L-valine + acetate. Functionally, N-acetyltaurine hydrolase that regulates feeding by catalyzing the hydrolysis of N-acetyltaurine into taurine and acetate. N-acetyltaurine has anorexigenic and anti-obesity effects that are dependent on GFRAL receptor and GDF15. PTER also acts on other N-acetyl amino acids (Met, Ile, Leu, Val) and N-propionyltaurine, but at lower rates. The sequence is that of N-acetyltaurine hydrolase (PTER) from Bos taurus (Bovine).